We begin with the raw amino-acid sequence, 194 residues long: Large ribosomal subunit protein uL22 (194 aa).

Belongs to the universal ribosomal protein uL22 family.

The polypeptide is Large ribosomal subunit protein uL22 (rpl17) (Aspergillus fumigatus (strain ATCC MYA-4609 / CBS 101355 / FGSC A1100 / Af293) (Neosartorya fumigata)).